The primary structure comprises 386 residues: L-lactate dehydrogenase (386 aa).

An FMN hydroxy acid dehydrogenase domain is found at 1–380 (MIISASTDYR…TSDSLVQVTQ (380 aa)). Residue Y24 participates in substrate binding. S106 and Q127 together coordinate FMN. Y129 serves as a coordination point for substrate. Residue T155 coordinates FMN. Substrate is bound at residue R164. K251 is an FMN binding site. The active-site Proton acceptor is the H275. R278 serves as a coordination point for substrate. FMN is bound at residue 306–330 (DSGIRSGLDVVRMIALGADGVMLGR).

The protein belongs to the FMN-dependent alpha-hydroxy acid dehydrogenase family. Requires FMN as cofactor.

The protein resides in the cell inner membrane. It carries out the reaction (S)-lactate + A = pyruvate + AH2. In terms of biological role, catalyzes the conversion of L-lactate to pyruvate. Is coupled to the respiratory chain. This chain is L-lactate dehydrogenase, found in Pectobacterium atrosepticum (strain SCRI 1043 / ATCC BAA-672) (Erwinia carotovora subsp. atroseptica).